Here is a 290-residue protein sequence, read N- to C-terminus: ATP synthase gamma chain (290 aa).

The protein belongs to the ATPase gamma chain family. F-type ATPases have 2 components, CF(1) - the catalytic core - and CF(0) - the membrane proton channel. CF(1) has five subunits: alpha(3), beta(3), gamma(1), delta(1), epsilon(1). CF(0) has three main subunits: a, b and c.

The protein localises to the cell inner membrane. Functionally, produces ATP from ADP in the presence of a proton gradient across the membrane. The gamma chain is believed to be important in regulating ATPase activity and the flow of protons through the CF(0) complex. The polypeptide is ATP synthase gamma chain (Bacteroides fragilis (strain YCH46)).